A 313-amino-acid chain; its full sequence is Kazal-type serine protease inhibitor domain-containing protein 1 (313 aa).

Residues 1-37 (MPRVFTGLPANYAAPTLALSLLLPLLLVVWTQLPVSA) form the signal peptide. The IGFBP N-terminal domain maps to 56 to 136 (EGEGCAPCRP…EVPEPLCVCR (81 aa)). Disulfide bonds link cysteine 60-cysteine 83, cysteine 63-cysteine 85, cysteine 68-cysteine 86, cysteine 74-cysteine 89, cysteine 97-cysteine 115, cysteine 109-cysteine 133, and cysteine 142-cysteine 175. The region spanning 127-177 (EVPEPLCVCRSQRPLCGSDGRTYAQICRLQEAARARLDANLTVVHPGPCES) is the Kazal-like domain. 2 N-linked (GlcNAc...) asparagine glycosylation sites follow: asparagine 166 and asparagine 190. The Ig-like C2-type domain maps to 179-276 (PQILSQPHNI…GQAEASATLT (98 aa)). A disulfide bridge connects residues cysteine 200 and cysteine 260. N-linked (GlcNAc...) asparagine glycosylation is present at asparagine 284. The segment at 290–313 (QLQSRSLFPEEEEEAESEELGDYY) is disordered. The span at 298 to 313 (PEEEEEAESEELGDYY) shows a compositional bias: acidic residues.

As to expression, highly expressed in the spleen. Moderately expressed in the skin, lung and urinary bladder. Weakly expressed in the brain, tongue, esophagus, stomach, large intestine, liver and bone. Expressed in osteoblastic cells during bone regeneration. Expressed in secretory osteoblasts in the tooth.

It localises to the secreted. Its subcellular location is the extracellular space. It is found in the extracellular matrix. Functionally, involved in the proliferation of osteoblasts during bone formation and bone regeneration. Promotes matrix assembly. The chain is Kazal-type serine protease inhibitor domain-containing protein 1 (Kazald1) from Mus musculus (Mouse).